The primary structure comprises 530 residues: NADH-quinone oxidoreductase subunit C/D (530 aa).

The segment at 1–144 (MEEIKYIEPA…NPLRMDNEET (144 aa)) is NADH dehydrogenase I subunit C. The interval 171 to 530 (EYVVNIGPQH…LDYVVPDIDR (360 aa)) is NADH dehydrogenase I subunit D.

The protein in the N-terminal section; belongs to the complex I 30 kDa subunit family. In the C-terminal section; belongs to the complex I 49 kDa subunit family. NDH-1 is composed of 13 different subunits. Subunits NuoB, CD, E, F, and G constitute the peripheral sector of the complex.

Its subcellular location is the cell inner membrane. It carries out the reaction a quinone + NADH + 5 H(+)(in) = a quinol + NAD(+) + 4 H(+)(out). NDH-1 shuttles electrons from NADH, via FMN and iron-sulfur (Fe-S) centers, to quinones in the respiratory chain. The immediate electron acceptor for the enzyme in this species is believed to be a menaquinone. Couples the redox reaction to proton translocation (for every two electrons transferred, four hydrogen ions are translocated across the cytoplasmic membrane), and thus conserves the redox energy in a proton gradient. The sequence is that of NADH-quinone oxidoreductase subunit C/D from Bacteroides fragilis (strain ATCC 25285 / DSM 2151 / CCUG 4856 / JCM 11019 / LMG 10263 / NCTC 9343 / Onslow / VPI 2553 / EN-2).